Here is a 211-residue protein sequence, read N- to C-terminus: Protein-L-isoaspartate O-methyltransferase (211 aa).

Residue Ser62 is part of the active site.

This sequence belongs to the methyltransferase superfamily. L-isoaspartyl/D-aspartyl protein methyltransferase family.

The protein localises to the cytoplasm. It catalyses the reaction [protein]-L-isoaspartate + S-adenosyl-L-methionine = [protein]-L-isoaspartate alpha-methyl ester + S-adenosyl-L-homocysteine. Functionally, catalyzes the methyl esterification of L-isoaspartyl residues in peptides and proteins that result from spontaneous decomposition of normal L-aspartyl and L-asparaginyl residues. It plays a role in the repair and/or degradation of damaged proteins. The sequence is that of Protein-L-isoaspartate O-methyltransferase from Shewanella baltica (strain OS223).